Reading from the N-terminus, the 212-residue chain is Thymidylate kinase (212 aa).

Position 11-18 (11-18) interacts with ATP; sequence GLEGAGKS.

Belongs to the thymidylate kinase family.

It carries out the reaction dTMP + ATP = dTDP + ADP. Its function is as follows. Phosphorylation of dTMP to form dTDP in both de novo and salvage pathways of dTTP synthesis. The sequence is that of Thymidylate kinase from Vibrio vulnificus (strain CMCP6).